A 634-amino-acid chain; its full sequence is DNA gyrase subunit B (634 aa).

The segment at 1 to 220 (MSYDASAIRV…EEVFLDKGGV (220 aa)) is ATPase domain. Residues 221-390 (ASFAKALAEG…EAARKARELV (170 aa)) are transducer domain. A Toprim domain is found at 416 to 534 (AELFIVEGDS…RGHVYIAQPP (119 aa)). 3 residues coordinate Mg(2+): Glu-422, Asp-499, and Asp-501.

This sequence belongs to the type II topoisomerase GyrB family. In terms of assembly, heterotetramer, composed of two GyrA and two GyrB chains. Non-hydrolyzable ATP analogs induce dimerization, novobiocin also induces a small amount of dimerization. The two subunits form an intertwined dimer where the GyrB ATPase transducer helix of 1 subunit connects to the Toprim domain of the other GyrB subunit through a 10 residue linker. In the heterotetramer, GyrA contains the active site tyrosine that forms a covalent intermediate with the DNA, while GyrB binds cofactors and catalyzes ATP hydrolysis. Requires Mg(2+) as cofactor. It depends on Mn(2+) as a cofactor. The cofactor is Ca(2+).

Its subcellular location is the cytoplasm. It catalyses the reaction ATP-dependent breakage, passage and rejoining of double-stranded DNA.. Its function is as follows. A type II topoisomerase that negatively supercoils closed circular double-stranded (ds) DNA in an ATP-dependent manner. It probably also catalyzes the interconversion of other topological isomers of double-stranded DNA rings, including catenanes. Relaxes negatively supercoiled DNA in an ATP-independent manner. At comparable concentrations T.thermophilus gyrase does not introduce as many negative supercoils into DNA as the E.coli enzyme. In terms of biological role, negative supercoiling favors strand separation, and DNA replication, transcription, recombination and repair, all of which involve strand separation. Type II topoisomerases break and join 2 DNA strands simultaneously in an ATP-dependent manner. The polypeptide is DNA gyrase subunit B (Thermus thermophilus (strain ATCC 27634 / DSM 579 / HB8)).